A 257-amino-acid polypeptide reads, in one-letter code: TLC domain-containing protein 3A (257 aa).

Helical transmembrane passes span 1 to 21 (MLLT…LSIW), 42 to 62 (LVSS…IISC), 71 to 91 (WLAT…FYAM), 114 to 134 (LIEN…LVPI), 142 to 162 (LGDF…FVSL), 181 to 201 (GILT…FMYW), and 220 to 240 (LHCN…FSLL). Positions 33-249 (DDCLTVGTRL…LCKKAARLFD (217 aa)) constitute a TLC domain.

In terms of assembly, interacts with GGT7 isoform 3 and SLC3A2.

It is found in the cell membrane. The protein is TLC domain-containing protein 3A (Tlcd3a) of Mus musculus (Mouse).